Reading from the N-terminus, the 480-residue chain is Acyl-coenzyme A synthetase ACSM6, mitochondrial (480 aa).

The transit peptide at 1–21 (MLGRFQPFSLVRSFRLGFEAC) directs the protein to the mitochondrion. Residues 226 to 234 (TKGTTGAPK), 366 to 371 (EGYGQT), Asp453, and Arg468 contribute to the ATP site.

It belongs to the ATP-dependent AMP-binding enzyme family. In terms of assembly, monomer. Mg(2+) is required as a cofactor. Mn(2+) serves as cofactor.

The protein localises to the mitochondrion. The enzyme catalyses a medium-chain fatty acid + ATP + CoA = a medium-chain fatty acyl-CoA + AMP + diphosphate. Its function is as follows. Catalyzes the activation of fatty acids by CoA to produce an acyl-CoA, the first step in fatty acid metabolism. The chain is Acyl-coenzyme A synthetase ACSM6, mitochondrial (ACSM6) from Homo sapiens (Human).